The chain runs to 625 residues: Probable potassium transport system protein Kup 2 (625 aa).

12 helical membrane-spanning segments follow: residues 15–35, 52–72, 98–118, 134–154, 164–184, 212–232, 246–266, 284–304, 336–356, 365–385, 394–414, and 417–437; these read LSFA…LYAF, ILSL…LVIV, GGWL…DGML, LSPN…FFLF, IGVY…ILGF, FALF…ALFA, WFAV…AFVL, FLPV…QAII, VYLP…VVIF, AYGI…GIIA, FKIL…AGNI, and LLTG…VMYT.

Belongs to the HAK/KUP transporter (TC 2.A.72) family.

The protein localises to the cell inner membrane. It catalyses the reaction K(+)(in) + H(+)(in) = K(+)(out) + H(+)(out). In terms of biological role, transport of potassium into the cell. Likely operates as a K(+):H(+) symporter. The chain is Probable potassium transport system protein Kup 2 from Legionella pneumophila (strain Paris).